Consider the following 336-residue polypeptide: Ventral anterior homeobox 1 (336 aa).

Residues 1 to 34 (MFGKTDKMDVRCHSDTEAARVSKNAHKESREIKG) are compositionally biased toward basic and acidic residues. Disordered stretches follow at residues 1–39 (MFGK…EGSL) and 50–69 (AFSA…NSSA). The segment at residues 100-159 (PKRTRTSFTAEQLYRLEMEFQRCQYVVGRERTELARQLNLSETQVKVWFQNRRTKQKKDQ) is a DNA-binding region (homeobox). The segment covering 236-250 (PGPAGAASQHPPAVG) has biased composition (low complexity). Disordered regions lie at residues 236 to 267 (PGPA…HAGA) and 316 to 336 (SAFE…KALD). The segment covering 325–336 (NNKEGAEKKALD) has biased composition (basic and acidic residues).

This sequence belongs to the EMX homeobox family.

The protein resides in the nucleus. In terms of biological role, transcription factor that may function in dorsoventral specification of the forebrain. Required for axon guidance and major tract formation in the developing forebrain. May contribute to the differentiation of the neuroretina, pigmented epithelium and optic stalk. The polypeptide is Ventral anterior homeobox 1 (Vax1) (Rattus norvegicus (Rat)).